The primary structure comprises 275 residues: Formamidopyrimidine-DNA glycosylase (275 aa).

The Schiff-base intermediate with DNA role is filled by proline 2. Glutamate 3 serves as the catalytic Proton donor. Lysine 58 functions as the Proton donor; for beta-elimination activity in the catalytic mechanism. DNA-binding residues include histidine 91 and arginine 110. An FPG-type zinc finger spans residues 238–272; that stretch reads QVYGQTGKPCPRCGQAIVKLKVGGRGTHICPKCQK. Arginine 262 (proton donor; for delta-elimination activity) is an active-site residue.

Belongs to the FPG family. Monomer. It depends on Zn(2+) as a cofactor.

It carries out the reaction Hydrolysis of DNA containing ring-opened 7-methylguanine residues, releasing 2,6-diamino-4-hydroxy-5-(N-methyl)formamidopyrimidine.. The enzyme catalyses 2'-deoxyribonucleotide-(2'-deoxyribose 5'-phosphate)-2'-deoxyribonucleotide-DNA = a 3'-end 2'-deoxyribonucleotide-(2,3-dehydro-2,3-deoxyribose 5'-phosphate)-DNA + a 5'-end 5'-phospho-2'-deoxyribonucleoside-DNA + H(+). Its function is as follows. Involved in base excision repair of DNA damaged by oxidation or by mutagenic agents. Acts as a DNA glycosylase that recognizes and removes damaged bases. Has a preference for oxidized purines, such as 7,8-dihydro-8-oxoguanine (8-oxoG). Has AP (apurinic/apyrimidinic) lyase activity and introduces nicks in the DNA strand. Cleaves the DNA backbone by beta-delta elimination to generate a single-strand break at the site of the removed base with both 3'- and 5'-phosphates. This Streptococcus pyogenes serotype M6 (strain ATCC BAA-946 / MGAS10394) protein is Formamidopyrimidine-DNA glycosylase.